Consider the following 353-residue polypeptide: Quinolinate synthase (353 aa).

Iminosuccinate-binding residues include His-47 and Ser-68. Cys-113 lines the [4Fe-4S] cluster pocket. Residues 139-141 and Ser-156 each bind iminosuccinate; that span reads YAN. Residue Cys-200 coordinates [4Fe-4S] cluster. Iminosuccinate-binding positions include 226-228 and Thr-243; that span reads HPE. Cys-297 lines the [4Fe-4S] cluster pocket.

It belongs to the quinolinate synthase family. Type 1 subfamily. It depends on [4Fe-4S] cluster as a cofactor.

It is found in the cytoplasm. It catalyses the reaction iminosuccinate + dihydroxyacetone phosphate = quinolinate + phosphate + 2 H2O + H(+). It participates in cofactor biosynthesis; NAD(+) biosynthesis; quinolinate from iminoaspartate: step 1/1. Functionally, catalyzes the condensation of iminoaspartate with dihydroxyacetone phosphate to form quinolinate. In Yersinia pseudotuberculosis serotype O:3 (strain YPIII), this protein is Quinolinate synthase.